We begin with the raw amino-acid sequence, 346 residues long: Dihydroorotate dehydrogenase (quinone) (346 aa).

Residues 61–65 (AGLDK) and T85 each bind FMN. Substrate is bound at residue K65. Residue 110–114 (NRMGF) participates in substrate binding. FMN contacts are provided by N138 and N171. N171 contributes to the substrate binding site. The active-site Nucleophile is the S174. N176 provides a ligand contact to substrate. K216 and T244 together coordinate FMN. 245–246 (NT) is a binding site for substrate. Residues G267, G296, and 317–318 (YS) each bind FMN.

Belongs to the dihydroorotate dehydrogenase family. Type 2 subfamily. In terms of assembly, monomer. Requires FMN as cofactor.

The protein resides in the cell membrane. It catalyses the reaction (S)-dihydroorotate + a quinone = orotate + a quinol. The protein operates within pyrimidine metabolism; UMP biosynthesis via de novo pathway; orotate from (S)-dihydroorotate (quinone route): step 1/1. Its function is as follows. Catalyzes the conversion of dihydroorotate to orotate with quinone as electron acceptor. The sequence is that of Dihydroorotate dehydrogenase (quinone) from Marinomonas sp. (strain MWYL1).